A 249-amino-acid chain; its full sequence is Segregation and condensation protein A (249 aa).

It belongs to the ScpA family. In terms of assembly, component of a cohesin-like complex composed of ScpA, ScpB and the Smc homodimer, in which ScpA and ScpB bind to the head domain of Smc. The presence of the three proteins is required for the association of the complex with DNA.

Its subcellular location is the cytoplasm. Participates in chromosomal partition during cell division. May act via the formation of a condensin-like complex containing Smc and ScpB that pull DNA away from mid-cell into both cell halves. The polypeptide is Segregation and condensation protein A (Listeria monocytogenes serotype 4a (strain HCC23)).